A 455-amino-acid chain; its full sequence is Bifunctional protein GlmU (455 aa).

Residues 1–226 (MSLDIVILAA…PMEVQGANDR (226 aa)) form a pyrophosphorylase region. Residues 8 to 11 (LAAG), K22, Q73, 78 to 79 (GT), 99 to 101 (YGD), G136, E151, N166, and N224 contribute to the UDP-N-acetyl-alpha-D-glucosamine site. D101 contacts Mg(2+). N224 is a binding site for Mg(2+). Residues 227–247 (RQLSELERHYQLREGRRLMAQ) form a linker region. The N-acetyltransferase stretch occupies residues 248–455 (GVTLRDPARF…WKRPEKTKKS (208 aa)). 2 residues coordinate UDP-N-acetyl-alpha-D-glucosamine: R330 and K348. H360 functions as the Proton acceptor in the catalytic mechanism. Positions 363 and 374 each coordinate UDP-N-acetyl-alpha-D-glucosamine. Acetyl-CoA contacts are provided by residues A377, 383-384 (NY), S402, A420, and R437.

This sequence in the N-terminal section; belongs to the N-acetylglucosamine-1-phosphate uridyltransferase family. In the C-terminal section; belongs to the transferase hexapeptide repeat family. In terms of assembly, homotrimer. The cofactor is Mg(2+).

The protein localises to the cytoplasm. The enzyme catalyses alpha-D-glucosamine 1-phosphate + acetyl-CoA = N-acetyl-alpha-D-glucosamine 1-phosphate + CoA + H(+). The catalysed reaction is N-acetyl-alpha-D-glucosamine 1-phosphate + UTP + H(+) = UDP-N-acetyl-alpha-D-glucosamine + diphosphate. It functions in the pathway nucleotide-sugar biosynthesis; UDP-N-acetyl-alpha-D-glucosamine biosynthesis; N-acetyl-alpha-D-glucosamine 1-phosphate from alpha-D-glucosamine 6-phosphate (route II): step 2/2. It participates in nucleotide-sugar biosynthesis; UDP-N-acetyl-alpha-D-glucosamine biosynthesis; UDP-N-acetyl-alpha-D-glucosamine from N-acetyl-alpha-D-glucosamine 1-phosphate: step 1/1. Its pathway is bacterial outer membrane biogenesis; LPS lipid A biosynthesis. Its function is as follows. Catalyzes the last two sequential reactions in the de novo biosynthetic pathway for UDP-N-acetylglucosamine (UDP-GlcNAc). The C-terminal domain catalyzes the transfer of acetyl group from acetyl coenzyme A to glucosamine-1-phosphate (GlcN-1-P) to produce N-acetylglucosamine-1-phosphate (GlcNAc-1-P), which is converted into UDP-GlcNAc by the transfer of uridine 5-monophosphate (from uridine 5-triphosphate), a reaction catalyzed by the N-terminal domain. The polypeptide is Bifunctional protein GlmU (Pseudomonas putida (strain GB-1)).